The following is a 289-amino-acid chain: Phosphatidylserine decarboxylase proenzyme (289 aa).

Residues Asp92, His149, and Ser254 each act as charge relay system; for autoendoproteolytic cleavage activity in the active site. The active-site Schiff-base intermediate with substrate; via pyruvic acid; for decarboxylase activity is the Ser254. Position 254 is a pyruvic acid (Ser); by autocatalysis (Ser254).

It belongs to the phosphatidylserine decarboxylase family. PSD-B subfamily. Prokaryotic type I sub-subfamily. As to quaternary structure, heterodimer of a large membrane-associated beta subunit and a small pyruvoyl-containing alpha subunit. Pyruvate serves as cofactor. In terms of processing, is synthesized initially as an inactive proenzyme. Formation of the active enzyme involves a self-maturation process in which the active site pyruvoyl group is generated from an internal serine residue via an autocatalytic post-translational modification. Two non-identical subunits are generated from the proenzyme in this reaction, and the pyruvate is formed at the N-terminus of the alpha chain, which is derived from the carboxyl end of the proenzyme. The autoendoproteolytic cleavage occurs by a canonical serine protease mechanism, in which the side chain hydroxyl group of the serine supplies its oxygen atom to form the C-terminus of the beta chain, while the remainder of the serine residue undergoes an oxidative deamination to produce ammonia and the pyruvoyl prosthetic group on the alpha chain. During this reaction, the Ser that is part of the protease active site of the proenzyme becomes the pyruvoyl prosthetic group, which constitutes an essential element of the active site of the mature decarboxylase.

Its subcellular location is the cell membrane. The enzyme catalyses a 1,2-diacyl-sn-glycero-3-phospho-L-serine + H(+) = a 1,2-diacyl-sn-glycero-3-phosphoethanolamine + CO2. The protein operates within phospholipid metabolism; phosphatidylethanolamine biosynthesis; phosphatidylethanolamine from CDP-diacylglycerol: step 2/2. Catalyzes the formation of phosphatidylethanolamine (PtdEtn) from phosphatidylserine (PtdSer). The chain is Phosphatidylserine decarboxylase proenzyme from Pseudomonas aeruginosa (strain LESB58).